The sequence spans 172 residues: Cytochrome c oxidase subunit 4 isoform 2, mitochondrial (172 aa).

A mitochondrion-targeting transit peptide spans M1–R34. Positions T13 to T22 are enriched in low complexity. The segment at T13 to Q32 is disordered. At M35–N101 the chain is on the mitochondrial matrix side. A helical transmembrane segment spans residues E102 to Y127. Residues V128–K172 lie on the Mitochondrial intermembrane side of the membrane.

Belongs to the cytochrome c oxidase IV family. In terms of assembly, component of the cytochrome c oxidase (complex IV, CIV), a multisubunit enzyme composed of 14 subunits. The complex is composed of a catalytic core of 3 subunits MT-CO1, MT-CO2 and MT-CO3, encoded in the mitochondrial DNA, and 11 supernumerary subunits COX4I, COX5A, COX5B, COX6A, COX6B, COX6C, COX7A, COX7B, COX7C, COX8 and NDUFA4, which are encoded in the nuclear genome. The complex exists as a monomer or a dimer and forms supercomplexes (SCs) in the inner mitochondrial membrane with NADH-ubiquinone oxidoreductase (complex I, CI) and ubiquinol-cytochrome c oxidoreductase (cytochrome b-c1 complex, complex III, CIII), resulting in different assemblies (supercomplex SCI(1)III(2)IV(1) and megacomplex MCI(2)III(2)IV(2)).

The protein localises to the mitochondrion inner membrane. It functions in the pathway energy metabolism; oxidative phosphorylation. Its function is as follows. Component of the cytochrome c oxidase, the last enzyme in the mitochondrial electron transport chain which drives oxidative phosphorylation. The respiratory chain contains 3 multisubunit complexes succinate dehydrogenase (complex II, CII), ubiquinol-cytochrome c oxidoreductase (cytochrome b-c1 complex, complex III, CIII) and cytochrome c oxidase (complex IV, CIV), that cooperate to transfer electrons derived from NADH and succinate to molecular oxygen, creating an electrochemical gradient over the inner membrane that drives transmembrane transport and the ATP synthase. Cytochrome c oxidase is the component of the respiratory chain that catalyzes the reduction of oxygen to water. Electrons originating from reduced cytochrome c in the intermembrane space (IMS) are transferred via the dinuclear copper A center (CU(A)) of subunit 2 and heme A of subunit 1 to the active site in subunit 1, a binuclear center (BNC) formed by heme A3 and copper B (CU(B)). The BNC reduces molecular oxygen to 2 water molecules using 4 electrons from cytochrome c in the IMS and 4 protons from the mitochondrial matrix. In Mus musculus (Mouse), this protein is Cytochrome c oxidase subunit 4 isoform 2, mitochondrial (Cox4i2).